Reading from the N-terminus, the 547-residue chain is Chaperonin GroEL (547 aa).

ATP contacts are provided by residues 30–33 (TLGP), Lys51, 87–91 (DGTTT), Gly415, 479–481 (NAA), and Asp495.

The protein belongs to the chaperonin (HSP60) family. As to quaternary structure, forms a cylinder of 14 subunits composed of two heptameric rings stacked back-to-back. Interacts with the co-chaperonin GroES.

It is found in the cytoplasm. It carries out the reaction ATP + H2O + a folded polypeptide = ADP + phosphate + an unfolded polypeptide.. Its function is as follows. Together with its co-chaperonin GroES, plays an essential role in assisting protein folding. The GroEL-GroES system forms a nano-cage that allows encapsulation of the non-native substrate proteins and provides a physical environment optimized to promote and accelerate protein folding. The chain is Chaperonin GroEL from Pseudomonas savastanoi pv. phaseolicola (strain 1448A / Race 6) (Pseudomonas syringae pv. phaseolicola (strain 1448A / Race 6)).